Reading from the N-terminus, the 467-residue chain is Protection of telomeres protein 1a (467 aa).

It belongs to the telombin family. Component of the telomerase holoenzyme complex at least composed of TERT, CBF5 and POT1a. The RNA molecule associated to the telomerase complex, and providing a template for telomeric DNA synthesis, is most likely TR and not TER1 as described previously. Interacts with the N-terminal part of TERT. Interacts with CBF5. Interacts with CTC1 and STN1. Does not interact with TEN1. In terms of tissue distribution, expressed in roots, rosette leaves, cauline leaves, stems and flowers.

The protein localises to the nucleus. Its subcellular location is the chromosome. It localises to the telomere. The protein resides in the nucleolus. It is found in the cytoplasm. Component of the telomerase ribonucleoprotein (RNP) complex that is essential for the positive regulation of telomere length. Binds RNA non-specifically. Binds specifically single-stranded telomeric DNA. Not required to recruit telomerase to telomeres, but stimulates TER1 RNP repeat addition processivity. The sequence is that of Protection of telomeres protein 1a from Arabidopsis thaliana (Mouse-ear cress).